The sequence spans 232 residues: Ribose-5-phosphate isomerase A (232 aa).

Substrate contacts are provided by residues 28–31 (TGST), 83–86 (DGAD), and 96–99 (KGGG). The active-site Proton acceptor is glutamate 105. Residue lysine 123 participates in substrate binding.

It belongs to the ribose 5-phosphate isomerase family. Homodimer.

It catalyses the reaction aldehydo-D-ribose 5-phosphate = D-ribulose 5-phosphate. It functions in the pathway carbohydrate degradation; pentose phosphate pathway; D-ribose 5-phosphate from D-ribulose 5-phosphate (non-oxidative stage): step 1/1. In terms of biological role, catalyzes the reversible conversion of ribose-5-phosphate to ribulose 5-phosphate. The chain is Ribose-5-phosphate isomerase A from Rhodopseudomonas palustris (strain BisB18).